Reading from the N-terminus, the 242-residue chain is Glutamine transport ATP-binding protein GlnQ (242 aa).

Residues 2–236 (IYFHQVNKYY…PKEERAKVFL (235 aa)) form the ABC transporter domain. 34–41 (GPSGSGKS) contacts ATP.

This sequence belongs to the ABC transporter superfamily.

The protein resides in the cell membrane. Part of the binding-protein-dependent transport system for glutamine. Probably responsible for energy coupling to the transport system. The chain is Glutamine transport ATP-binding protein GlnQ (glnQ) from Geobacillus stearothermophilus (Bacillus stearothermophilus).